A 341-amino-acid chain; its full sequence is L-threonine 3-dehydrogenase (341 aa).

A Zn(2+)-binding site is contributed by Cys38. Residues Thr40 and His43 each act as charge relay system in the active site. Residues His63, Glu64, Cys93, Cys96, Cys99, and Cys107 each coordinate Zn(2+). NAD(+)-binding positions include Ile175, Asp195, Arg200, Leu262–Ile264, and Ile286–Tyr287.

The protein belongs to the zinc-containing alcohol dehydrogenase family. In terms of assembly, homotetramer. Zn(2+) serves as cofactor.

The protein resides in the cytoplasm. The enzyme catalyses L-threonine + NAD(+) = (2S)-2-amino-3-oxobutanoate + NADH + H(+). Its pathway is amino-acid degradation; L-threonine degradation via oxydo-reductase pathway; glycine from L-threonine: step 1/2. Its function is as follows. Catalyzes the NAD(+)-dependent oxidation of L-threonine to 2-amino-3-ketobutyrate. The chain is L-threonine 3-dehydrogenase from Shewanella sp. (strain W3-18-1).